The primary structure comprises 502 residues: Glycerol kinase (502 aa).

Residue T14 participates in ADP binding. ATP contacts are provided by T14, T15, and S16. Position 14 (T14) interacts with sn-glycerol 3-phosphate. Residue R18 coordinates ADP. Residues R84, E85, and Y136 each contribute to the sn-glycerol 3-phosphate site. Residues R84, E85, and Y136 each contribute to the glycerol site. H232 is modified (phosphohistidine; by HPr). D246 serves as a coordination point for sn-glycerol 3-phosphate. Glycerol-binding residues include D246 and Q247. ADP-binding residues include T268 and G311. Residues T268, G311, Q315, and G412 each contribute to the ATP site. ADP-binding residues include G412 and N416.

This sequence belongs to the FGGY kinase family. In terms of assembly, homotetramer and homodimer (in equilibrium). In terms of processing, the phosphoenolpyruvate-dependent sugar phosphotransferase system (PTS), including enzyme I, and histidine-containing protein (HPr) are required for the phosphorylation, which leads to the activation of the enzyme.

It carries out the reaction glycerol + ATP = sn-glycerol 3-phosphate + ADP + H(+). It participates in polyol metabolism; glycerol degradation via glycerol kinase pathway; sn-glycerol 3-phosphate from glycerol: step 1/1. Activated by phosphorylation and inhibited by fructose 1,6-bisphosphate (FBP). Key enzyme in the regulation of glycerol uptake and metabolism. Catalyzes the phosphorylation of glycerol to yield sn-glycerol 3-phosphate. The polypeptide is Glycerol kinase (Streptococcus pneumoniae serotype 19F (strain G54)).